Here is a 152-residue protein sequence, read N- to C-terminus: NADH-ubiquinone oxidoreductase chain 4 (152 aa).

The next 4 helical transmembrane spans lie at 2 to 22 (FSGA…YFCL), 43 to 63 (ILLP…LALP), 84 to 104 (ITIV…LHMF), and 128 to 148 (MLMF…NIIL).

The protein belongs to the complex I subunit 4 family.

The protein resides in the mitochondrion membrane. The enzyme catalyses a ubiquinone + NADH + 5 H(+)(in) = a ubiquinol + NAD(+) + 4 H(+)(out). Functionally, core subunit of the mitochondrial membrane respiratory chain NADH dehydrogenase (Complex I) that is believed to belong to the minimal assembly required for catalysis. Complex I functions in the transfer of electrons from NADH to the respiratory chain. The immediate electron acceptor for the enzyme is believed to be ubiquinone. The chain is NADH-ubiquinone oxidoreductase chain 4 (MT-ND4) from Macaca fascicularis (Crab-eating macaque).